Here is a 37-residue protein sequence, read N- to C-terminus: Large ribosomal subunit protein bL36 (37 aa).

The protein belongs to the bacterial ribosomal protein bL36 family.

In Borreliella burgdorferi (strain ATCC 35210 / DSM 4680 / CIP 102532 / B31) (Borrelia burgdorferi), this protein is Large ribosomal subunit protein bL36.